The chain runs to 188 residues: dCTP deaminase (188 aa).

DCTP is bound by residues 111–116 (KSTYAR), 135–137 (TLE), Gln-156, Tyr-170, Lys-179, and Gln-180. The active-site Proton donor/acceptor is Glu-137.

Belongs to the dCTP deaminase family. As to quaternary structure, homotrimer.

The catalysed reaction is dCTP + H2O + H(+) = dUTP + NH4(+). The protein operates within pyrimidine metabolism; dUMP biosynthesis; dUMP from dCTP (dUTP route): step 1/2. Its function is as follows. Catalyzes the deamination of dCTP to dUTP. The polypeptide is dCTP deaminase (Rickettsia typhi (strain ATCC VR-144 / Wilmington)).